The sequence spans 275 residues: 3-methyl-2-oxobutanoate hydroxymethyltransferase (275 aa).

Positions 49 and 88 each coordinate Mg(2+). Residues 49-50 (DS), aspartate 88, and lysine 118 contribute to the 3-methyl-2-oxobutanoate site. A Mg(2+)-binding site is contributed by glutamate 120. Glutamate 187 functions as the Proton acceptor in the catalytic mechanism.

Belongs to the PanB family. As to quaternary structure, homodecamer; pentamer of dimers. Mg(2+) serves as cofactor.

The protein localises to the cytoplasm. The enzyme catalyses 3-methyl-2-oxobutanoate + (6R)-5,10-methylene-5,6,7,8-tetrahydrofolate + H2O = 2-dehydropantoate + (6S)-5,6,7,8-tetrahydrofolate. The protein operates within cofactor biosynthesis; (R)-pantothenate biosynthesis; (R)-pantoate from 3-methyl-2-oxobutanoate: step 1/2. Functionally, catalyzes the reversible reaction in which hydroxymethyl group from 5,10-methylenetetrahydrofolate is transferred onto alpha-ketoisovalerate to form ketopantoate. In Nitrobacter hamburgensis (strain DSM 10229 / NCIMB 13809 / X14), this protein is 3-methyl-2-oxobutanoate hydroxymethyltransferase.